Consider the following 454-residue polypeptide: Transmembrane protease serine 3 (454 aa).

Residues 1–48 (MGENDPPAVEAPFSFRSLFGLDDLKISPVAPDADAVAAQILSLLPLKF) are Cytoplasmic-facing. The chain crosses the membrane as a helical; Signal-anchor for type II membrane protein span at residues 49 to 69 (FPIIVIGIIALILALAIGLGI). The Extracellular segment spans residues 70–454 (HFDCSGKYRC…HEQMERDLKT (385 aa)). Positions 72–108 (DCSGKYRCRSSFKCIELIARCDGVSDCKDGEDEYRCV) constitute an LDL-receptor class A domain. 10 disulfide bridges follow: Cys73/Cys85, Cys79/Cys98, Cys92/Cys107, Cys129/Cys194, Cys142/Cys204, Cys207/Cys324, Cys242/Cys258, Cys338/Cys407, Cys370/Cys386, and Cys397/Cys425. One can recognise an SRCR domain in the interval 109 to 205 (RVGGQNAVLQ…SGHVVTLQCT (97 aa)). The Peptidase S1 domain occupies 217-449 (IVGGNMSLLS…FLDWIHEQME (233 aa)). Asn221 carries an N-linked (GlcNAc...) asparagine glycan. Active-site charge relay system residues include His257 and Asp304. The Charge relay system role is filled by Ser401.

The protein belongs to the peptidase S1 family. Undergoes autoproteolytic activation. As to expression, expressed in many tissues including fetal cochlea. Isoform T is found at increased levels in some carcinomas.

The protein resides in the endoplasmic reticulum membrane. In terms of biological role, probable serine protease that plays a role in hearing. Acts as a permissive factor for cochlear hair cell survival and activation at the onset of hearing and is required for saccular hair cell survival. Activates ENaC (in vitro). The sequence is that of Transmembrane protease serine 3 (TMPRSS3) from Homo sapiens (Human).